The following is a 419-amino-acid chain: Glutamate dehydrogenase (419 aa).

K105 is an active-site residue. 219–225 (GYGNAGY) lines the NAD(+) pocket.

This sequence belongs to the Glu/Leu/Phe/Val dehydrogenases family. As to quaternary structure, homohexamer.

The protein resides in the cytoplasm. It carries out the reaction L-glutamate + NAD(+) + H2O = 2-oxoglutarate + NH4(+) + NADH + H(+). The enzyme catalyses L-glutamate + NADP(+) + H2O = 2-oxoglutarate + NH4(+) + NADPH + H(+). This is Glutamate dehydrogenase (gdhA) from Thermococcus litoralis (strain ATCC 51850 / DSM 5473 / JCM 8560 / NS-C).